The following is a 103-amino-acid chain: Cell division protein CrgA (103 aa).

2 helical membrane passes run 49-69 (FVPL…VYYL) and 80-100 (IGAW…LMTM).

The protein belongs to the CrgA family.

The protein localises to the cell membrane. Involved in cell division. The sequence is that of Cell division protein CrgA from Bifidobacterium longum (strain NCC 2705).